The primary structure comprises 362 residues: 3-dehydroquinate synthase (362 aa).

NAD(+) contacts are provided by residues 71–76 (DGEKYK), 105–109 (GVIGD), 129–130 (TT), Lys142, and Lys151. 3 residues coordinate Zn(2+): Glu184, His248, and His265.

This sequence belongs to the sugar phosphate cyclases superfamily. Dehydroquinate synthase family. The cofactor is Co(2+). It depends on Zn(2+) as a cofactor. NAD(+) serves as cofactor.

It is found in the cytoplasm. The enzyme catalyses 7-phospho-2-dehydro-3-deoxy-D-arabino-heptonate = 3-dehydroquinate + phosphate. It functions in the pathway metabolic intermediate biosynthesis; chorismate biosynthesis; chorismate from D-erythrose 4-phosphate and phosphoenolpyruvate: step 2/7. Functionally, catalyzes the conversion of 3-deoxy-D-arabino-heptulosonate 7-phosphate (DAHP) to dehydroquinate (DHQ). The sequence is that of 3-dehydroquinate synthase from Hamiltonella defensa subsp. Acyrthosiphon pisum (strain 5AT).